The following is a 159-amino-acid chain: MTPRQRRLGMLLAALACAGIALALVLNAFRSNLVFFFSPSQVAAHEAPASRSFRLGGLVAPGSIRREGDGMTVRFIVTDKAREVPVVYRGLLPDLFREGKGVVARGTLDRSGTFVASEVLAKHDENYMPPEAADALKQAEQVNRRMASQLAEGERETQR.

Over 1-7 (MTPRQRR) the chain is Cytoplasmic. A helical; Signal-anchor for type II membrane protein transmembrane segment spans residues 8-28 (LGMLLAALACAGIALALVLNA). The Periplasmic portion of the chain corresponds to 29-159 (FRSNLVFFFS…LAEGERETQR (131 aa)). Positions 123 and 127 each coordinate heme.

This sequence belongs to the CcmE/CycJ family.

It localises to the cell inner membrane. Its function is as follows. Heme chaperone required for the biogenesis of c-type cytochromes. Transiently binds heme delivered by CcmC and transfers the heme to apo-cytochromes in a process facilitated by CcmF and CcmH. The protein is Cytochrome c-type biogenesis protein CcmE of Cupriavidus pinatubonensis (strain JMP 134 / LMG 1197) (Cupriavidus necator (strain JMP 134)).